A 324-amino-acid chain; its full sequence is Serine carboxypeptidase II-1 (324 aa).

N-linked (GlcNAc...) asparagine glycosylation is present at asparagine 10. Residue serine 41 is part of the active site. 2 cysteine pairs are disulfide-bonded: cysteine 109-cysteine 121 and cysteine 145-cysteine 170. The propeptide at leucine 150–tryptophan 162 is linker peptide. Asparagine 191 is a glycosylation site (N-linked (GlcNAc...) asparagine). Residues aspartate 239 and histidine 291 contribute to the active site.

The protein belongs to the peptidase S10 family. Carboxypeptidase II is a dimer, where each monomer is composed of two chains linked by a disulfide bond. In terms of processing, the linker peptide is endoproteolytically excised during enzyme maturation.

It catalyses the reaction Preferential release of a C-terminal arginine or lysine residue.. The chain is Serine carboxypeptidase II-1 (CXP;2-1) from Hordeum vulgare (Barley).